The sequence spans 321 residues: Isoaspartyl peptidase (321 aa).

Thr-179 serves as the catalytic Nucleophile. Substrate-binding positions include 207-210 and 230-233; these read RVGD and TGTG.

This sequence belongs to the Ntn-hydrolase family. As to quaternary structure, heterotetramer of two alpha and two beta chains arranged as a dimer of alpha/beta heterodimers. Autocleaved. Generates the alpha and beta subunits. The N-terminal residue of the beta subunit is thought to be responsible for the nucleophile hydrolase activity. Post-translationally, both subunits undergo further processing at their C-termini. The overexpressed alpha subunit seems to consist of residues 2-161, with an oxidized Met residue and a tightly coordinated Na(+), whereas the overexpressed beta subunit is processed to residue 315 and has 3 oxidized Met residues. Processing of the alpha subunit is inhibited by Zn(2+).

It carries out the reaction Cleavage of a beta-linked Asp residue from the N-terminus of a polypeptide.. Functionally, degrades proteins damaged by L-isoaspartyl residue formation (also known as beta-Asp residues). Degrades L-isoaspartyl-containing di- and maybe also tripeptides. Also has L-asparaginase activity, although this may not be its principal function. Its function is as follows. May be involved in glutathione, and possibly other peptide, transport, although these results could also be due to polar effects of disruption. The protein is Isoaspartyl peptidase (iaaA) of Escherichia coli (strain K12).